The chain runs to 591 residues: Aspartate--tRNA(Asp/Asn) ligase (591 aa).

Glu175 is a binding site for L-aspartate. Positions 199 to 202 are aspartate; it reads QQYK. Positions 221 and 450 each coordinate L-aspartate. 221–223 is an ATP binding site; sequence RDE. An ATP-binding site is contributed by Glu484. Arg491 serves as a coordination point for L-aspartate. Position 536–539 (536–539) interacts with ATP; it reads GVDR.

The protein belongs to the class-II aminoacyl-tRNA synthetase family. Type 1 subfamily. In terms of assembly, homodimer.

Its subcellular location is the cytoplasm. The enzyme catalyses tRNA(Asx) + L-aspartate + ATP = L-aspartyl-tRNA(Asx) + AMP + diphosphate. Functionally, aspartyl-tRNA synthetase with relaxed tRNA specificity since it is able to aspartylate not only its cognate tRNA(Asp) but also tRNA(Asn). Reaction proceeds in two steps: L-aspartate is first activated by ATP to form Asp-AMP and then transferred to the acceptor end of tRNA(Asp/Asn). This Rhodopseudomonas palustris (strain TIE-1) protein is Aspartate--tRNA(Asp/Asn) ligase.